Here is a 767-residue protein sequence, read N- to C-terminus: Photosystem I P700 chlorophyll a apoprotein A1 (767 aa).

Helical transmembrane passes span 72-95 (IFSAHFGHLAVIFIWLSGAFFHGA), 158-181 (LMALAIGALVMAGLMLNAGVFHYH), 197-221 (LNHHLAGLLGLGSLSWAGHVIHVSA), 305-323 (IAHHHVAIAVMFIVAGHMY), 364-387 (WHAQLAVNLAIGGSVSIIVAQHMY), 403-429 (IGLFTHHIWIGGFLIVGAGAHAAIAMV), 451-473 (AIISHLNWVCIWLGAHSFGLYIH), and 548-566 (FMVHHIHAFTIHVTVLILL). Residues C590 and C599 each contribute to the [4Fe-4S] cluster site. 2 helical membrane passes run 606-627 (HVFLGLFWMYNSLSIVIFHFSW) and 681-703 (TAAYGIMFLGAHFVFAFSLMFLF). Position 692 (H692) interacts with chlorophyll a'. M700 and Y708 together coordinate chlorophyll a. Residue W709 participates in phylloquinone binding. A helical transmembrane segment spans residues 741 to 761 (AVGVAHYLLGGIATTWAFFHA).

The protein belongs to the PsaA/PsaB family. As to quaternary structure, the PsaA/B heterodimer binds the P700 chlorophyll special pair and subsequent electron acceptors. PSI consists of a core antenna complex that captures photons, and an electron transfer chain that converts photonic excitation into a charge separation. The cyanobacterial PSI reaction center is composed of one copy each of PsaA,B,C,D,E,F,I,J,K,L,M and X, and forms trimeric complexes. Requires PSI electron transfer chain: 5 chlorophyll a, 1 chlorophyll a', 2 phylloquinones and 3 4Fe-4S clusters. PSI core antenna: 90 chlorophyll a, 22 carotenoids, 3 phospholipids and 1 galactolipid. P700 is a chlorophyll a/chlorophyll a' dimer, A0 is one or more chlorophyll a, A1 is one or both phylloquinones and FX is a shared 4Fe-4S iron-sulfur center. as cofactor.

The protein localises to the cellular thylakoid membrane. It catalyses the reaction reduced [plastocyanin] + hnu + oxidized [2Fe-2S]-[ferredoxin] = oxidized [plastocyanin] + reduced [2Fe-2S]-[ferredoxin]. Its function is as follows. PsaA and PsaB bind P700, the primary electron donor of photosystem I (PSI), as well as the electron acceptors A0, A1 and FX. PSI is a plastocyanin/cytochrome c6-ferredoxin oxidoreductase, converting photonic excitation into a charge separation, which transfers an electron from the donor P700 chlorophyll pair to the spectroscopically characterized acceptors A0, A1, FX, FA and FB in turn. Oxidized P700 is reduced on the lumenal side of the thylakoid membrane by plastocyanin or cytochrome c6. This Synechococcus sp. (strain CC9605) protein is Photosystem I P700 chlorophyll a apoprotein A1.